The primary structure comprises 406 residues: MLLLQFSNMVEPTGPAIVEDERTKALNSYRRKLAECRDIEQKLKDLRKKESEMTKQFDKSENDIKSLQSVGQIVGEVLKQLSEEKFIVKATNGPRYVVGCRRSINKEELKQGTRVSLDMTTLTIMRQLPREVDPLVYKMSHEDPGNISYSDVGGLAEQIRELREVVELPLINPELFKRVGITPPKGCLLFGPPGTGKTLLARAVASQLDCNFLKVVSSAIVDKYIGESARMIREMFNYARDHQPCIVFMDEIDAIGGRRFSEGTSADREIQRTLMELLNQLDGFDSLGKVKVIMATNRPDTLDPALLRPGRLDRKIEIGLPNEQSRLEILKIHSNKITKHGEIDFEAVVKLSDGFSAADLRNVCTEAGMFAIRAEREFVIDEDFMKAVRKVGDAKRLETKLDYKPV.

Residue 191-198 (GPPGTGKT) coordinates ATP.

This sequence belongs to the AAA ATPase family.

Its subcellular location is the cytoplasm. It localises to the nucleus. Functionally, the 26S proteasome is involved in the ATP-dependent degradation of ubiquitinated proteins. The regulatory (or ATPase) complex confers ATP dependency and substrate specificity to the 26S complex. The sequence is that of Probable 26S proteasome regulatory subunit 10B (rpt-4) from Caenorhabditis elegans.